Reading from the N-terminus, the 423-residue chain is Imidazolonepropionase (423 aa).

The Fe(3+) site is built by His-78 and His-80. Residues His-78 and His-80 each contribute to the Zn(2+) site. 3 residues coordinate 4-imidazolone-5-propanoate: Arg-87, Tyr-150, and His-183. Tyr-150 is a binding site for N-formimidoyl-L-glutamate. Residue His-247 coordinates Fe(3+). A Zn(2+)-binding site is contributed by His-247. Glu-250 serves as a coordination point for 4-imidazolone-5-propanoate. Asp-322 provides a ligand contact to Fe(3+). Residue Asp-322 coordinates Zn(2+). The N-formimidoyl-L-glutamate site is built by Asn-324 and Gly-326. A 4-imidazolone-5-propanoate-binding site is contributed by Ser-327.

Belongs to the metallo-dependent hydrolases superfamily. HutI family. Requires Zn(2+) as cofactor. It depends on Fe(3+) as a cofactor.

It localises to the cytoplasm. The catalysed reaction is 4-imidazolone-5-propanoate + H2O = N-formimidoyl-L-glutamate. It functions in the pathway amino-acid degradation; L-histidine degradation into L-glutamate; N-formimidoyl-L-glutamate from L-histidine: step 3/3. Its function is as follows. Catalyzes the hydrolytic cleavage of the carbon-nitrogen bond in imidazolone-5-propanoate to yield N-formimidoyl-L-glutamate. It is the third step in the universal histidine degradation pathway. The polypeptide is Imidazolonepropionase (Bacillus cytotoxicus (strain DSM 22905 / CIP 110041 / 391-98 / NVH 391-98)).